A 909-amino-acid chain; its full sequence is Protein NLP1 (909 aa).

Disordered regions lie at residues 51-71 (KSLK…DNSP), 536-556 (KEDP…PVPN), 568-605 (ASTP…RAKT), and 690-745 (NSPN…ENTG). Over residues 55-70 (QTEQSPSASTAMNDNS) the composition is skewed to polar residues. In terms of domain architecture, RWP-RK spans 595–676 (RRPGEKKRAK…MDSVQGAQGS (82 aa)). Positions 690-716 (NSPNMSSNGPSLKSNEQPSHLNAQTDN) are enriched in polar residues. The segment covering 725 to 745 (RSPSSSCSKSSGSSNNNENTG) has biased composition (low complexity). In terms of domain architecture, PB1 spans 811 to 894 (AIKVKATFGE…HTIKISLNEA (84 aa)).

The protein resides in the nucleus. Functionally, probable transcription factor. The polypeptide is Protein NLP1 (NLP1) (Arabidopsis thaliana (Mouse-ear cress)).